The sequence spans 222 residues: Probable mitochondrial import inner membrane translocase subunit Tim17 3 (222 aa).

Helical transmembrane passes span C16–F36, S60–V80, and A115–I135.

This sequence belongs to the Tim17/Tim22/Tim23 family. Component of the TIM23 complex at least composed of Tim23, Tim17 (Tim17a1, Tim17a2 or Tim17b1) and a Tim50. The complex interacts with the Tim44 component of the PAM complex.

Its subcellular location is the mitochondrion inner membrane. Its function is as follows. Essential component of the TIM23 complex, a complex that mediates the translocation of transit peptide-containing proteins across the mitochondrial inner membrane. This chain is Probable mitochondrial import inner membrane translocase subunit Tim17 3 (Tim17a1), found in Drosophila melanogaster (Fruit fly).